Here is a 453-residue protein sequence, read N- to C-terminus: Aminodeoxychorismate synthase component 1 (453 aa).

Residues S36, 43-46 (YSRF), and 240-242 (PFS) contribute to the L-tryptophan site. Catalysis depends on E258, which acts as the Proton donor. K274 acts as the N6-(4-deoxychorismate)-lysine intermediate in catalysis.

This sequence belongs to the anthranilate synthase component I family. In terms of assembly, monomer. Heterodimer consisting of two non-identical subunits: a glutamine amidotransferase subunit (PabA) and a aminodeoxychorismate synthase subunit (PabB). It depends on Mg(2+) as a cofactor.

It catalyses the reaction chorismate + L-glutamine = 4-amino-4-deoxychorismate + L-glutamate. It participates in cofactor biosynthesis; tetrahydrofolate biosynthesis; 4-aminobenzoate from chorismate: step 1/2. With respect to regulation, inhibited by 6-diazo-5-oxo-L-norleucine (DON). The inhibition is competitive with glutamine but uncompetitive with chorismate. Also inhibited by 2-fluorochorismate. Functionally, part of a heterodimeric complex that catalyzes the two-step biosynthesis of 4-amino-4-deoxychorismate (ADC), a precursor of p-aminobenzoate (PABA) and tetrahydrofolate. In the first step, a glutamine amidotransferase (PabA) generates ammonia as a substrate that, along with chorismate, is used in the second step, catalyzed by aminodeoxychorismate synthase (PabB) to produce ADC. PabB, in the absence of PabA, can catalyze the formation of ADC in the presence of exogenous ammonia. In Escherichia coli (strain K12), this protein is Aminodeoxychorismate synthase component 1 (pabB).